Here is a 453-residue protein sequence, read N- to C-terminus: GTPase Der (453 aa).

EngA-type G domains follow at residues 4 to 169 (PIVA…PPTT) and 177 to 352 (IKIA…EEHK). GTP is bound by residues 10-17 (GRPNVGKS), 57-61 (DTGGL), 120-123 (NKCE), 183-190 (GRPNVGKS), 230-234 (DTAGI), and 295-298 (NKWD). In terms of domain architecture, KH-like spans 353-438 (RRVSTSVINE…PIRLLWRSKK (86 aa)).

The protein belongs to the TRAFAC class TrmE-Era-EngA-EngB-Septin-like GTPase superfamily. EngA (Der) GTPase family. Associates with the 50S ribosomal subunit.

Its function is as follows. GTPase that plays an essential role in the late steps of ribosome biogenesis. The polypeptide is GTPase Der (Trichormus variabilis (strain ATCC 29413 / PCC 7937) (Anabaena variabilis)).